Reading from the N-terminus, the 87-residue chain is Dynein light chain 1, cytoplasmic (87 aa).

It belongs to the dynein light chain family. As to quaternary structure, homodimer. Cytoplasmic dynein consists of two catalytic heavy chains (HCs) and a number of non-catalytic subunits which present intermediate chains (ICs), light intermediate chains (LICs) and light chains (LCs). Component of the nuclear pore complex (NPC). NPC constitutes the exclusive means of nucleocytoplasmic transport. NPCs allow the passive diffusion of ions and small molecules and the active, nuclear transport receptor-mediated bidirectional transport of macromolecules such as proteins, RNAs, ribonucleoparticles (RNPs), and ribosomal subunits across the nuclear envelope. Due to its 8-fold rotational symmetry, all subunits are present with 8 copies or multiples thereof.

It localises to the cytoplasm. It is found in the cytoskeleton. The protein localises to the nucleus. Its subcellular location is the nuclear pore complex. Acts as one of several non-catalytic accessory components of the cytoplasmic dynein complex that are thought to be involved in linking dynein to cargos and to adapter proteins that regulate dynein function. Cytoplasmic dynein 1 acts as a motor for the intracellular retrograde motility of vesicles and organelles along microtubules. May play a role in changing or maintaining the spatial distribution of cytoskeletal structures. Also a component of the nuclear pore complex. The protein is Dynein light chain 1, cytoplasmic (DYN2) of Kluyveromyces lactis (strain ATCC 8585 / CBS 2359 / DSM 70799 / NBRC 1267 / NRRL Y-1140 / WM37) (Yeast).